We begin with the raw amino-acid sequence, 371 residues long: MPRPIQARIHSSALQANLRRVRQSVPDAKVWAVVKANAYGHGIARVFESLRGADGFALLDLAEAQGLRGLGWRGPILLLEGVFEPRDLELCSRLGLWHVVHCDEQIDMLAAHRSQAPQHVFLKLNAGMNRLGFAPQRYRSAWARLGALAQVDEISLMAHFSDADGPRGIAPQLAAFVRATQDLPGARSLCNSAATLRHAADASVRADWVRAGIVLYGSAPDFPGHDAGHWGLQPAMTLATRLIGVQQLQAGDTVGYGARFVAPGPMAIGVAACGYADGYPLHCGTGTPVLVDGIRTRVVGRVSMDMLTVDLTPLQRAGLQPGFGSEVTLWGRASSGAVLSIDEVAQAGGTLGYELMCALAQRVPVTLDGRA.

The Proton acceptor; specific for D-alanine role is filled by lysine 35. Lysine 35 carries the N6-(pyridoxal phosphate)lysine modification. Residue arginine 130 coordinates substrate. Tyrosine 256 functions as the Proton acceptor; specific for L-alanine in the catalytic mechanism. Methionine 304 contacts substrate.

Belongs to the alanine racemase family. Pyridoxal 5'-phosphate serves as cofactor.

The enzyme catalyses L-alanine = D-alanine. It participates in amino-acid biosynthesis; D-alanine biosynthesis; D-alanine from L-alanine: step 1/1. Functionally, catalyzes the interconversion of L-alanine and D-alanine. May also act on other amino acids. The protein is Alanine racemase (alr) of Verminephrobacter eiseniae (strain EF01-2).